A 181-amino-acid chain; its full sequence is Crossover junction endodeoxyribonuclease RuvC (181 aa).

Residues Asp7, Glu67, and Asp139 contribute to the active site. Mg(2+) contacts are provided by Asp7, Glu67, and Asp139.

The protein belongs to the RuvC family. In terms of assembly, homodimer which binds Holliday junction (HJ) DNA. The HJ becomes 2-fold symmetrical on binding to RuvC with unstacked arms; it has a different conformation from HJ DNA in complex with RuvA. In the full resolvosome a probable DNA-RuvA(4)-RuvB(12)-RuvC(2) complex forms which resolves the HJ. Mg(2+) is required as a cofactor.

Its subcellular location is the cytoplasm. It carries out the reaction Endonucleolytic cleavage at a junction such as a reciprocal single-stranded crossover between two homologous DNA duplexes (Holliday junction).. Its function is as follows. The RuvA-RuvB-RuvC complex processes Holliday junction (HJ) DNA during genetic recombination and DNA repair. Endonuclease that resolves HJ intermediates. Cleaves cruciform DNA by making single-stranded nicks across the HJ at symmetrical positions within the homologous arms, yielding a 5'-phosphate and a 3'-hydroxyl group; requires a central core of homology in the junction. The consensus cleavage sequence is 5'-(A/T)TT(C/G)-3'. Cleavage occurs on the 3'-side of the TT dinucleotide at the point of strand exchange. HJ branch migration catalyzed by RuvA-RuvB allows RuvC to scan DNA until it finds its consensus sequence, where it cleaves and resolves the cruciform DNA. In Cupriavidus pinatubonensis (strain JMP 134 / LMG 1197) (Cupriavidus necator (strain JMP 134)), this protein is Crossover junction endodeoxyribonuclease RuvC.